A 322-amino-acid chain; its full sequence is Gluconeogenesis factor (322 aa).

Belongs to the gluconeogenesis factor family.

It localises to the cytoplasm. Functionally, required for morphogenesis under gluconeogenic growth conditions. The protein is Gluconeogenesis factor of Listeria monocytogenes serovar 1/2a (strain ATCC BAA-679 / EGD-e).